The primary structure comprises 424 residues: Tyrosine--tRNA ligase (424 aa).

Tyr37 is a binding site for L-tyrosine. A 'HIGH' region motif is present at residues 42-51; the sequence is PTADSLHLGH. Lys144 is modified (N6-acetyllysine). L-tyrosine is bound by residues Tyr175 and Gln179. Residues 235–239 carry the 'KMSKS' region motif; that stretch reads KFGKT. Lys238 provides a ligand contact to ATP. The region spanning 357–414 is the S4 RNA-binding domain; that stretch reads ADLMQALVDSELQPSRGQARKTIASNAITINGEKQSDPEYFFKEEDRLFGRFTLLRRG.

The protein belongs to the class-I aminoacyl-tRNA synthetase family. TyrS type 1 subfamily. Homodimer.

The protein resides in the cytoplasm. The catalysed reaction is tRNA(Tyr) + L-tyrosine + ATP = L-tyrosyl-tRNA(Tyr) + AMP + diphosphate + H(+). Functionally, catalyzes the attachment of tyrosine to tRNA(Tyr) in a two-step reaction: tyrosine is first activated by ATP to form Tyr-AMP and then transferred to the acceptor end of tRNA(Tyr). In Shigella flexneri serotype 5b (strain 8401), this protein is Tyrosine--tRNA ligase.